The chain runs to 906 residues: Formin-like protein 18 (906 aa).

The N-terminal stretch at 1-25 (MSKLRWLIMAFLVCLLLLTPKDLEG) is a signal peptide. The helical transmembrane segment at 120–140 (MVVVGLSAACVALVTLVGICF) threads the bilayer. 2 disordered regions span residues 267 to 416 (AGGG…QADP) and 854 to 906 (NAKA…DSDD). The span at 274–292 (AAPPPPAGPPPPAPPPLPP) shows a compositional bias: pro residues. Residues 293–303 (SHHHHHGHHPP) show a composition bias toward basic residues. Pro residues-rich tracts occupy residues 320-339 (APPP…PAPS), 348-375 (GPPP…PPPG), and 383-402 (GPPP…PPFK). Composition is skewed to low complexity over residues 403–416 (KSPG…QADP) and 854–877 (NAKA…QSSF). One can recognise an FH2 domain in the interval 411 to 866 (AAQADPNKAK…AKKQQQPTPA (456 aa)). The span at 878-889 (RDPRQQIQDRRA) shows a compositional bias: basic and acidic residues. A compositionally biased stretch (low complexity) spans 897 to 906 (SSSSSSDSDD).

Belongs to the formin-like family. Class-I subfamily.

The protein localises to the membrane. This Oryza sativa subsp. japonica (Rice) protein is Formin-like protein 18 (FH18).